The primary structure comprises 335 residues: Probable cyclin-H (335 aa).

Belongs to the cyclin family. Cyclin C subfamily.

It is found in the nucleus. Regulates CDK7, the catalytic subunit of the CDK-activating kinase (CAK) enzymatic complex. This Echinococcus multilocularis (Fox tapeworm) protein is Probable cyclin-H (CYCH).